The sequence spans 277 residues: Indole-3-glycerol phosphate synthase (277 aa).

Belongs to the TrpC family.

It catalyses the reaction 1-(2-carboxyphenylamino)-1-deoxy-D-ribulose 5-phosphate + H(+) = (1S,2R)-1-C-(indol-3-yl)glycerol 3-phosphate + CO2 + H2O. The protein operates within amino-acid biosynthesis; L-tryptophan biosynthesis; L-tryptophan from chorismate: step 4/5. This chain is Indole-3-glycerol phosphate synthase, found in Pseudomonas putida (strain ATCC 47054 / DSM 6125 / CFBP 8728 / NCIMB 11950 / KT2440).